Here is a 370-residue protein sequence, read N- to C-terminus: Protein FAM110B (370 aa).

Disordered stretches follow at residues 127-151 (SSEG…RSEA) and 237-256 (KSPE…RPSL). Residues S238 and S301 each carry the phosphoserine modification. A disordered region spans residues 317–337 (DCEQSQDSNSDLRNDDSANDR). A compositionally biased stretch (basic and acidic residues) spans 326 to 335 (SDLRNDDSAN).

The protein belongs to the FAM110 family.

The protein localises to the cytoplasm. It localises to the cytoskeleton. The protein resides in the microtubule organizing center. It is found in the centrosome. The protein is Protein FAM110B (FAM110B) of Pongo abelii (Sumatran orangutan).